The following is a 218-amino-acid chain: Elongation factor Ts (218 aa).

The segment at 82 to 85 (TDFV) is involved in Mg(2+) ion dislocation from EF-Tu.

This sequence belongs to the EF-Ts family.

Its subcellular location is the cytoplasm. In terms of biological role, associates with the EF-Tu.GDP complex and induces the exchange of GDP to GTP. It remains bound to the aminoacyl-tRNA.EF-Tu.GTP complex up to the GTP hydrolysis stage on the ribosome. The chain is Elongation factor Ts from Prochlorococcus marinus (strain MIT 9312).